The following is a 972-amino-acid chain: Isoleucine--tRNA ligase (972 aa).

A 'HIGH' region motif is present at residues 63-73 (PYANGNIHIGH). Glu603 contributes to the L-isoleucyl-5'-AMP binding site. A 'KMSKS' region motif is present at residues 644-648 (KMSKS). Position 647 (Lys647) interacts with ATP.

Belongs to the class-I aminoacyl-tRNA synthetase family. IleS type 1 subfamily. Monomer.

The protein resides in the cytoplasm. The enzyme catalyses tRNA(Ile) + L-isoleucine + ATP = L-isoleucyl-tRNA(Ile) + AMP + diphosphate. In terms of biological role, catalyzes the attachment of isoleucine to tRNA(Ile). As IleRS can inadvertently accommodate and process structurally similar amino acids such as valine, to avoid such errors it has two additional distinct tRNA(Ile)-dependent editing activities. One activity is designated as 'pretransfer' editing and involves the hydrolysis of activated Val-AMP. The other activity is designated 'posttransfer' editing and involves deacylation of mischarged Val-tRNA(Ile). In Brucella suis biovar 1 (strain 1330), this protein is Isoleucine--tRNA ligase.